A 265-amino-acid polypeptide reads, in one-letter code: MSFPYFISPEQAMRERSELARKGIARGRSVVALAYAGGVLFVAENPSRSLQKISELYDRVGFAAAGKFNEFDNLRRGGIQFADTRGYAYDRRDVTGRQLANVYAQTLGTIFTEQAKPYEVELCVAEVAHYGETKPPELYRITYDGSINDEPHFMVMGGTTESIANALKESYAENASLTDALGIAVAALRAGSADAAGSDQPTLGVASLEVAVLDANRPRRAFRRIIGSGLEALLREKDSKGSKGAQNPKGARDSKNSKSYGESTD.

Residues glutamate 236–aspartate 265 are disordered.

It belongs to the peptidase T1A family. As to quaternary structure, the 20S proteasome core is composed of 14 alpha and 14 beta subunits that assemble into four stacked heptameric rings, resulting in a barrel-shaped structure. The two inner rings, each composed of seven catalytic beta subunits, are sandwiched by two outer rings, each composed of seven alpha subunits. The catalytic chamber with the active sites is on the inside of the barrel. Has a gated structure, the ends of the cylinder being occluded by the N-termini of the alpha-subunits. Is capped by the proteasome-associated ATPase, ARC.

The protein resides in the cytoplasm. It participates in protein degradation; proteasomal Pup-dependent pathway. The formation of the proteasomal ATPase ARC-20S proteasome complex, likely via the docking of the C-termini of ARC into the intersubunit pockets in the alpha-rings, may trigger opening of the gate for substrate entry. Interconversion between the open-gate and close-gate conformations leads to a dynamic regulation of the 20S proteasome proteolysis activity. In terms of biological role, component of the proteasome core, a large protease complex with broad specificity involved in protein degradation. This chain is Proteasome subunit alpha, found in Mycobacterium leprae (strain Br4923).